The sequence spans 1668 residues: DNA polymerase (1668 aa).

DOD-type homing endonuclease domains lie at 739-872 (LLGY…SLGV) and 1191-1330 (LIGL…LVGV).

Belongs to the DNA polymerase type-B family. Post-translationally, this protein undergoes a protein self splicing that involves a post-translational excision of the intervening region (intein) followed by peptide ligation.

The catalysed reaction is DNA(n) + a 2'-deoxyribonucleoside 5'-triphosphate = DNA(n+1) + diphosphate. Functionally, in addition to polymerase activity, this DNA polymerase exhibits 3' to 5' exonuclease activity. Its function is as follows. PI-ThyI and PI-ThyII are endonucleases. PI-ThyI cleaves the inteinless sequence of the Thy DNA pol gene. It requires a 21-bp minimal recognition sequence. In Thermococcus hydrothermalis, this protein is DNA polymerase (pol).